The primary structure comprises 338 residues: UDP-glucose 4-epimerase (338 aa).

NAD(+)-binding positions include 11-12, 31-36, 58-59, 80-84, N99, S124, Y149, K153, and F178; these read YI, DNLCNS, DI, and FAGLK. Residues S124 and Y149 each contribute to the substrate site. Residue Y149 is the Proton acceptor of the active site. Substrate-binding positions include N179, 199-200, 216-218, R231, and 292-295; these read NL, SVF, and RPGD.

The protein belongs to the NAD(P)-dependent epimerase/dehydratase family. As to quaternary structure, homodimer. It depends on NAD(+) as a cofactor.

It carries out the reaction UDP-alpha-D-glucose = UDP-alpha-D-galactose. It participates in carbohydrate metabolism; galactose metabolism. In terms of biological role, involved in the metabolism of galactose. Catalyzes the conversion of UDP-galactose (UDP-Gal) to UDP-glucose (UDP-Glc) through a mechanism involving the transient reduction of NAD. This is UDP-glucose 4-epimerase (galE) from Pasteurella multocida (strain Pm70).